The chain runs to 143 residues: Putative complexin-1 (143 aa).

Residues 16 to 72 (EVTGGLGMKDDGGEKTETGEDPEVIAARLEQEERRKEKHRKMENEREKMRQGIRDKY) form a disordered region. Basic and acidic residues-rich tracts occupy residues 23 to 33 (MKDDGGEKTET) and 44 to 72 (LEQE…RDKY). Residues 40-71 (IAARLEQEERRKEKHRKMENEREKMRQGIRDK) are a coiled coil.

This sequence belongs to the complexin/synaphin family.

The protein localises to the cytoplasm. Its subcellular location is the cytosol. In terms of biological role, positively regulates a late step in synaptic vesicle exocytosis. The polypeptide is Putative complexin-1 (cpx-1) (Caenorhabditis elegans).